The following is a 373-amino-acid chain: SH3 domain-binding protein 5-like (373 aa).

Positions 1 to 53 (MEGKEGPSCEVRLPTPGAEREGPIHPELGAFGETASNTIKLSESSNDGKKEEI) are disordered. The segment covering 34 to 45 (TASNTIKLSESS) has biased composition (polar residues). 2 coiled-coil regions span residues 55 to 98 (EELD…ESAR) and 170 to 272 (WQEM…SEEI). Disordered stretches follow at residues 276–305 (RTQS…TGPP) and 344–373 (TGAV…SVSL). Over residues 344-358 (TGAVECGGSRERGGD) the composition is skewed to basic and acidic residues.

The protein belongs to the SH3BP5 family.

In terms of biological role, functions as a guanine nucleotide exchange factor (GEF) for rab11a. This is SH3 domain-binding protein 5-like (sh3bp5l) from Xenopus tropicalis (Western clawed frog).